The primary structure comprises 631 residues: PTS system beta-glucoside-specific EIIBCA component (631 aa).

Positions 1-86 (MNYETLASEI…LSLDGMARFS (86 aa)) constitute a PTS EIIB type-1 domain. The active-site Phosphocysteine intermediate; for EIIB activity is C26. The PTS EIIC type-1 domain maps to 105–466 (DIISSIFTPF…DETQPAAADS (362 aa)). Transmembrane regions (helical) follow at residues 120 to 140 (ATGI…ISES), 146 to 166 (LLFA…GYTA), 175 to 195 (FTTL…AFNA), 206 to 226 (FLGI…ILFA), 248 to 268 (FFTP…LIGP), 295 to 315 (VMGA…FVPL), 328 to 348 (LLPL…GVLL), 358 to 378 (IAGS…VYGV), 385 to 405 (PFIF…YAHT), and 434 to 454 (AVIG…SFGV). Residues 501–605 (DRTFASGVMG…DLTTPIVITN (105 aa)) form the PTS EIIA type-1 domain. The Tele-phosphohistidine intermediate; for EIIA activity role is filled by H553.

The protein localises to the cell inner membrane. The phosphoenolpyruvate-dependent sugar phosphotransferase system (sugar PTS), a major carbohydrate active -transport system, catalyzes the phosphorylation of incoming sugar substrates concomitantly with their translocation across the cell membrane. This system is involved in beta-glucoside transport. In terms of biological role, acts both as a kinase and as a phosphatase on ArbG. The protein is PTS system beta-glucoside-specific EIIBCA component (arbF) of Dickeya chrysanthemi (Pectobacterium chrysanthemi).